A 237-amino-acid chain; its full sequence is Aspartate/glutamate leucyltransferase (237 aa).

Belongs to the R-transferase family. Bpt subfamily.

Its subcellular location is the cytoplasm. It catalyses the reaction N-terminal L-glutamyl-[protein] + L-leucyl-tRNA(Leu) = N-terminal L-leucyl-L-glutamyl-[protein] + tRNA(Leu) + H(+). The enzyme catalyses N-terminal L-aspartyl-[protein] + L-leucyl-tRNA(Leu) = N-terminal L-leucyl-L-aspartyl-[protein] + tRNA(Leu) + H(+). Its function is as follows. Functions in the N-end rule pathway of protein degradation where it conjugates Leu from its aminoacyl-tRNA to the N-termini of proteins containing an N-terminal aspartate or glutamate. This Marinobacter nauticus (strain ATCC 700491 / DSM 11845 / VT8) (Marinobacter aquaeolei) protein is Aspartate/glutamate leucyltransferase.